Here is a 689-residue protein sequence, read N- to C-terminus: Methionine--tRNA ligase (689 aa).

The short motif at 15-25 (PYANGPIHLGH) is the 'HIGH' region element. 4 residues coordinate Zn(2+): Cys-146, Cys-149, Cys-159, and Cys-162. A 'KMSKS' region motif is present at residues 332–336 (KMSKS). Residue Lys-335 coordinates ATP. One can recognise a tRNA-binding domain in the interval 588–689 (DFAKIDLRIA…EGAQPGMRVK (102 aa)).

This sequence belongs to the class-I aminoacyl-tRNA synthetase family. MetG type 1 subfamily. In terms of assembly, homodimer. Zn(2+) is required as a cofactor.

The protein resides in the cytoplasm. The enzyme catalyses tRNA(Met) + L-methionine + ATP = L-methionyl-tRNA(Met) + AMP + diphosphate. Functionally, is required not only for elongation of protein synthesis but also for the initiation of all mRNA translation through initiator tRNA(fMet) aminoacylation. The protein is Methionine--tRNA ligase of Shewanella baltica (strain OS223).